The chain runs to 298 residues: uncharacterized protein (298 aa).

The 102-residue stretch at lysine 194 to serine 295 folds into the HTH araC/xylS-type domain. DNA-binding regions (H-T-H motif) lie at residues glutamate 214–isoleucine 235 and valine 262–tyrosine 285.

This is an uncharacterized protein from Haemophilus influenzae (strain ATCC 51907 / DSM 11121 / KW20 / Rd).